The sequence spans 652 residues: DNA ligase (652 aa).

NAD(+) contacts are provided by residues 29–33 (DAEYD), 78–79 (SL), and glutamate 107. Lysine 109 acts as the N6-AMP-lysine intermediate in catalysis. Positions 130, 164, 278, and 302 each coordinate NAD(+). Residues cysteine 395, cysteine 398, cysteine 413, and cysteine 418 each coordinate Zn(2+). The BRCT domain occupies 577–652 (ADDAILSGKT…VKDEAWLLDL (76 aa)).

It belongs to the NAD-dependent DNA ligase family. LigA subfamily. It depends on Mg(2+) as a cofactor. Requires Mn(2+) as cofactor.

It carries out the reaction NAD(+) + (deoxyribonucleotide)n-3'-hydroxyl + 5'-phospho-(deoxyribonucleotide)m = (deoxyribonucleotide)n+m + AMP + beta-nicotinamide D-nucleotide.. In terms of biological role, DNA ligase that catalyzes the formation of phosphodiester linkages between 5'-phosphoryl and 3'-hydroxyl groups in double-stranded DNA using NAD as a coenzyme and as the energy source for the reaction. It is essential for DNA replication and repair of damaged DNA. The sequence is that of DNA ligase from Streptococcus thermophilus (strain CNRZ 1066).